The following is a 422-amino-acid chain: Adenylosuccinate synthetase (422 aa).

Residues 11–17 and 39–41 each bind GTP; these read GDEGKGK and GHT. Aspartate 12 (proton acceptor) is an active-site residue. Aspartate 12 and glycine 39 together coordinate Mg(2+). IMP-binding positions include 12-15, 37-40, threonine 129, arginine 143, asparagine 219, threonine 234, and arginine 298; these read DEGK and NAGH. Histidine 40 functions as the Proton donor in the catalytic mechanism. Residue 294-300 participates in substrate binding; sequence VTTGRKR. Residues arginine 300, 326-328, and 411-413 each bind GTP; these read KLD and GTG.

This sequence belongs to the adenylosuccinate synthetase family. In terms of assembly, homodimer. Mg(2+) is required as a cofactor.

It is found in the cytoplasm. It catalyses the reaction IMP + L-aspartate + GTP = N(6)-(1,2-dicarboxyethyl)-AMP + GDP + phosphate + 2 H(+). The protein operates within purine metabolism; AMP biosynthesis via de novo pathway; AMP from IMP: step 1/2. Plays an important role in the de novo pathway and in the salvage pathway of purine nucleotide biosynthesis. Catalyzes the first committed step in the biosynthesis of AMP from IMP. This chain is Adenylosuccinate synthetase, found in Talaromyces marneffei (strain ATCC 18224 / CBS 334.59 / QM 7333) (Penicillium marneffei).